The primary structure comprises 213 residues: 3-isopropylmalate dehydratase small subunit (213 aa).

Belongs to the LeuD family. LeuD type 1 subfamily. In terms of assembly, heterodimer of LeuC and LeuD.

It catalyses the reaction (2R,3S)-3-isopropylmalate = (2S)-2-isopropylmalate. It functions in the pathway amino-acid biosynthesis; L-leucine biosynthesis; L-leucine from 3-methyl-2-oxobutanoate: step 2/4. Functionally, catalyzes the isomerization between 2-isopropylmalate and 3-isopropylmalate, via the formation of 2-isopropylmaleate. The protein is 3-isopropylmalate dehydratase small subunit of Pseudomonas savastanoi pv. phaseolicola (strain 1448A / Race 6) (Pseudomonas syringae pv. phaseolicola (strain 1448A / Race 6)).